Consider the following 950-residue polypeptide: 2-oxoglutarate dehydrogenase E1 component (950 aa).

It belongs to the alpha-ketoglutarate dehydrogenase family. As to quaternary structure, homodimer. Part of the 2-oxoglutarate dehydrogenase (OGDH) complex composed of E1 (2-oxoglutarate dehydrogenase), E2 (dihydrolipoamide succinyltransferase) and E3 (dihydrolipoamide dehydrogenase); the complex contains multiple copies of the three enzymatic components (E1, E2 and E3). The cofactor is thiamine diphosphate.

It catalyses the reaction N(6)-[(R)-lipoyl]-L-lysyl-[protein] + 2-oxoglutarate + H(+) = N(6)-[(R)-S(8)-succinyldihydrolipoyl]-L-lysyl-[protein] + CO2. E1 component of the 2-oxoglutarate dehydrogenase (OGDH) complex which catalyzes the decarboxylation of 2-oxoglutarate, the first step in the conversion of 2-oxoglutarate to succinyl-CoA and CO(2). In Cupriavidus necator (strain ATCC 17699 / DSM 428 / KCTC 22496 / NCIMB 10442 / H16 / Stanier 337) (Ralstonia eutropha), this protein is 2-oxoglutarate dehydrogenase E1 component (odhA).